The following is a 509-amino-acid chain: MLKDFREARIKEIDELRNLGINPYPYSYNKTHTTEDIKKQFEHLSNGEVTDKRVSTAGRIMSIREHGKSAFFHIKDTYGRIQAYIRKDKTENYEFFKERVTVGDIVGVEGIVFKSNTGEITILVEKFELLVKPLRPMPEKWHGIKDKEVLYRQRYVDMIANDETIKRFRMRSDIIRMIREFLTKKGFFEVETPILQYLTGGASARPFITHLNALDIDMYLRIATELHLKRFIVGGFDKVYEIGKIFRNEGISYKHHPEFTSIELYQAYADYEDMMNLTEELITYLVEQLYGTTKITYQGQEIDFTRPWRRVKMRDFIKENLGVDIIEDSDETMAKVLAENGVEVDINDRGHMIEKLWDLVEDKVIQPTFLLEHPVEISPLAKKHREDPRVTERFELIIYGREMANAFSELNDPVDQLERFMNQLRLRDLGDQEAQMLDKDFVRALEYGMPPTGGLGIGIDRLVMLLTDSANIRDVIAFPLVRPEGDIDIEDYTDLEKSEIIEKEGGNKA.

The Mg(2+) site is built by Glu-395 and Glu-402.

The protein belongs to the class-II aminoacyl-tRNA synthetase family. As to quaternary structure, homodimer. Mg(2+) serves as cofactor.

The protein localises to the cytoplasm. The enzyme catalyses tRNA(Lys) + L-lysine + ATP = L-lysyl-tRNA(Lys) + AMP + diphosphate. The chain is Lysine--tRNA ligase from Fervidobacterium nodosum (strain ATCC 35602 / DSM 5306 / Rt17-B1).